The following is a 231-amino-acid chain: Ribose-5-phosphate isomerase A (231 aa).

Substrate-binding positions include 28–31 (TGST), 83–86 (DGAD), and 96–99 (KGGG). E105 acts as the Proton acceptor in catalysis. Residue K123 coordinates substrate.

It belongs to the ribose 5-phosphate isomerase family. As to quaternary structure, homodimer.

The enzyme catalyses aldehydo-D-ribose 5-phosphate = D-ribulose 5-phosphate. Its pathway is carbohydrate degradation; pentose phosphate pathway; D-ribose 5-phosphate from D-ribulose 5-phosphate (non-oxidative stage): step 1/1. In terms of biological role, catalyzes the reversible conversion of ribose-5-phosphate to ribulose 5-phosphate. This is Ribose-5-phosphate isomerase A from Sinorhizobium medicae (strain WSM419) (Ensifer medicae).